The sequence spans 144 residues: Large ribosomal subunit protein uL15 (144 aa).

Residues 1–58 (MHLNTLSPAPGSHKARKRCGRGIGSGIGKTGGRGHKGQKSRSGGSVRPGFEGGQMPLK) form a disordered region. The span at 21–31 (RGIGSGIGKTG) shows a compositional bias: gly residues.

This sequence belongs to the universal ribosomal protein uL15 family. In terms of assembly, part of the 50S ribosomal subunit.

Functionally, binds to the 23S rRNA. The protein is Large ribosomal subunit protein uL15 of Colwellia psychrerythraea (strain 34H / ATCC BAA-681) (Vibrio psychroerythus).